Here is a 500-residue protein sequence, read N- to C-terminus: Nuclear distribution protein PAC1 (500 aa).

7 WD repeats span residues 125 to 164 (HNGH…EPQQ), 169 to 219 (AHTR…NLKA), 225 to 265 (GHEN…IVLS), 268 to 310 (GHSN…LMIG), 338 to 378 (QNEL…IRSD), 397 to 436 (EHKS…ESNL), and 459 to 500 (IKDQ…EYIL).

This sequence belongs to the WD repeat LIS1/nudF family. In terms of assembly, self-associates. Interacts with NDL1 and dynein.

Its subcellular location is the cytoplasm. It localises to the cytoskeleton. The protein localises to the spindle pole. In terms of biological role, positively regulates the activity of the minus-end directed microtubule motor protein dynein. Plays a central role in positioning the mitotic spindle at the bud neck during cell division. Targets cytoplasmic dynein to microtubule plus ends, thereby promoting dynein-mediated microtubule sliding along the bud cortex and consequently the movement of the mitotic spindle to the bud neck. The protein is Nuclear distribution protein PAC1 of Komagataella phaffii (strain GS115 / ATCC 20864) (Yeast).